A 287-amino-acid polypeptide reads, in one-letter code: ATP synthase gamma chain (287 aa).

It belongs to the ATPase gamma chain family. F-type ATPases have 2 components, CF(1) - the catalytic core - and CF(0) - the membrane proton channel. CF(1) has five subunits: alpha(3), beta(3), gamma(1), delta(1), epsilon(1). CF(0) has three main subunits: a, b and c.

The protein localises to the cell inner membrane. Functionally, produces ATP from ADP in the presence of a proton gradient across the membrane. The gamma chain is believed to be important in regulating ATPase activity and the flow of protons through the CF(0) complex. The chain is ATP synthase gamma chain from Salmonella gallinarum (strain 287/91 / NCTC 13346).